Here is a 266-residue protein sequence, read N- to C-terminus: Ribosomal RNA small subunit methyltransferase A (266 aa).

Residues Asn-11, Leu-13, Gly-37, Glu-57, Asp-85, and Asn-104 each coordinate S-adenosyl-L-methionine.

Belongs to the class I-like SAM-binding methyltransferase superfamily. rRNA adenine N(6)-methyltransferase family. RsmA subfamily.

It localises to the cytoplasm. The catalysed reaction is adenosine(1518)/adenosine(1519) in 16S rRNA + 4 S-adenosyl-L-methionine = N(6)-dimethyladenosine(1518)/N(6)-dimethyladenosine(1519) in 16S rRNA + 4 S-adenosyl-L-homocysteine + 4 H(+). Its function is as follows. Specifically dimethylates two adjacent adenosines (A1518 and A1519) in the loop of a conserved hairpin near the 3'-end of 16S rRNA in the 30S particle. May play a critical role in biogenesis of 30S subunits. This Campylobacter jejuni subsp. jejuni serotype O:2 (strain ATCC 700819 / NCTC 11168) protein is Ribosomal RNA small subunit methyltransferase A.